Reading from the N-terminus, the 418-residue chain is UDP-glucuronic acid decarboxylase 1 (418 aa).

Over 1-17 the chain is Cytoplasmic; the sequence is MMRMSWMVTVINRRMMK. Residues 18–38 traverse the membrane as a helical; Signal-anchor for type II membrane protein segment; that stretch reads ILIALALIAYIASVWGTYANM. The Lumenal portion of the chain corresponds to 39–418; that stretch reads RSIQEHGEMK…RMKKGRPRHN (380 aa). NAD(+) is bound by residues glycine 96, phenylalanine 97, valine 98, aspartate 117, asparagine 118, phenylalanine 120, threonine 121, glycine 122, aspartate 142, and valine 143. The UDP-alpha-D-glucuronate site is built by leucine 147 and tyrosine 148. The NAD(+) site is built by leucine 157 and serine 159. A UDP-alpha-D-glucuronate-binding site is contributed by lysine 175. Threonine 176 is a binding site for NAD(+). UDP-alpha-D-glucuronate contacts are provided by asparagine 183, glycine 186, lysine 189, and arginine 190. NAD(+) contacts are provided by alanine 198, tyrosine 229, and lysine 233. The Proton acceptor role is filled by tyrosine 229. 3 residues coordinate UDP-alpha-D-glucuronate: tyrosine 243, glutamine 246, and glutamate 247. Residues threonine 259, histidine 265, and arginine 270 each contribute to the NAD(+) site. Residues asparagine 314 and asparagine 383 are each glycosylated (N-linked (GlcNAc...) asparagine). A disordered region spans residues 397 to 418; the sequence is ANNQYIPKPKAARMKKGRPRHN. Basic residues predominate over residues 406 to 418; sequence KAARMKKGRPRHN.

It belongs to the NAD(P)-dependent epimerase/dehydratase family. UDP-glucuronic acid decarboxylase subfamily. As to quaternary structure, homodimer and homotetramer. NAD(+) serves as cofactor.

It is found in the golgi apparatus. Its subcellular location is the golgi stack membrane. The enzyme catalyses UDP-alpha-D-glucuronate + H(+) = UDP-alpha-D-xylose + CO2. It participates in nucleotide-sugar biosynthesis; UDP-alpha-D-xylose biosynthesis; UDP-alpha-D-xylose from UDP-alpha-D-glucuronate: step 1/1. Functionally, catalyzes the NAD-dependent decarboxylation of UDP-glucuronic acid to UDP-xylose. Necessary for the biosynthesis of the core tetrasaccharide in glycosaminoglycan biosynthesis. Essential during embryogenesis for craniofacial development. The chain is UDP-glucuronic acid decarboxylase 1 from Danio rerio (Zebrafish).